The sequence spans 434 residues: Ribosomal protein uS12 methylthiotransferase RimO (434 aa).

The MTTase N-terminal domain maps to 6-122 (NRVFLLSLGC…ILTAIGARYR (117 aa)). Residues cysteine 15, cysteine 51, cysteine 85, cysteine 146, cysteine 150, and cysteine 153 each coordinate [4Fe-4S] cluster. The Radical SAM core domain occupies 132 to 361 (TAPGHTSFLK…MELQEGISEE (230 aa)). Residues 364–431 (KRLEGREIAV…PYELFGTVLK (68 aa)) enclose the TRAM domain.

It belongs to the methylthiotransferase family. RimO subfamily. The cofactor is [4Fe-4S] cluster.

The protein localises to the cytoplasm. The enzyme catalyses L-aspartate(89)-[ribosomal protein uS12]-hydrogen + (sulfur carrier)-SH + AH2 + 2 S-adenosyl-L-methionine = 3-methylsulfanyl-L-aspartate(89)-[ribosomal protein uS12]-hydrogen + (sulfur carrier)-H + 5'-deoxyadenosine + L-methionine + A + S-adenosyl-L-homocysteine + 2 H(+). Catalyzes the methylthiolation of an aspartic acid residue of ribosomal protein uS12. The chain is Ribosomal protein uS12 methylthiotransferase RimO from Chlorobium phaeovibrioides (strain DSM 265 / 1930) (Prosthecochloris vibrioformis (strain DSM 265)).